The chain runs to 66 residues: Large ribosomal subunit protein bL31 (66 aa).

Zn(2+) contacts are provided by cysteine 16, cysteine 18, cysteine 36, and cysteine 39.

Belongs to the bacterial ribosomal protein bL31 family. Type A subfamily. Part of the 50S ribosomal subunit. It depends on Zn(2+) as a cofactor.

Functionally, binds the 23S rRNA. This chain is Large ribosomal subunit protein bL31, found in Sulfurimonas denitrificans (strain ATCC 33889 / DSM 1251) (Thiomicrospira denitrificans (strain ATCC 33889 / DSM 1251)).